Consider the following 129-residue polypeptide: MSAEKKPASKAPAEKKPAAKKTAPSADGKKRTKARKETYSSYIYKVLKQTHPDTGISQKSMSILNSFVNDIFERIASEASKLAAYNKKSTISAREIQTAVRLILPGELAKHAVSEGTRAVTKYSSSTQA.

The span at Met1–Pro17 shows a compositional bias: basic and acidic residues. The segment at Met1–Arg35 is disordered. N6-acetyllysine; alternate is present on residues Lys5 and Lys6. Glycyl lysine isopeptide (Lys-Gly) (interchain with G-Cter in SUMO); alternate cross-links involve residues Lys5 and Lys6. At Ser9 the chain carries Phosphoserine. N6-acetyllysine is present on Lys10. N6-acetyllysine; alternate is present on Lys15. Residue Lys15 forms a Glycyl lysine isopeptide (Lys-Gly) (interchain with G-Cter in SUMO); alternate linkage. Lys16 participates in a covalent cross-link: Glycyl lysine isopeptide (Lys-Gly) (interchain with G-Cter in SUMO). A Glycyl lysine isopeptide (Lys-Gly) (interchain with G-Cter in ubiquitin) cross-link involves residue Lys122.

Belongs to the histone H2B family. In terms of assembly, the nucleosome is a histone octamer containing two molecules each of H2A, H2B, H3 and H4 assembled in one H3-H4 heterotetramer and two H2A-H2B heterodimers. The octamer wraps approximately 147 bp of DNA. In terms of processing, monoubiquitinated by the UBC2-BRE1 complex to form H2BK123ub1. H2BK123ub1 gives a specific tag for epigenetic transcriptional activation and is also prerequisite for H3K4me and H3K79me formation. H2BK123ub1 also modulates the formation of double-strand breaks during meiosis and is a prerequisite for DNA-damage checkpoint activation. Phosphorylated by STE20 to form H2BS10ph during progression through meiotic prophase. May be correlated with chromosome condensation. Post-translationally, acetylated by GCN5 to form H2BK11ac and H2BK16ac. H2BK16ac can also be formed by ESA1. Acetylation of N-terminal lysines and particularly formation of H2BK11acK16ac has a positive effect on transcription. In terms of processing, sumoylation to form H2BK6su or H2BK7su, and probably also H2BK16su or H2BK17su, occurs preferentially near the telomeres and represses gene transcription.

The protein resides in the nucleus. It is found in the chromosome. Core component of nucleosome. Nucleosomes wrap and compact DNA into chromatin, limiting DNA accessibility to the cellular machineries which require DNA as a template. Histones thereby play a central role in transcription regulation, DNA repair, DNA replication and chromosomal stability. DNA accessibility is regulated via a complex set of post-translational modifications of histones, also called histone code, and nucleosome remodeling. This Candida glabrata (strain ATCC 2001 / BCRC 20586 / JCM 3761 / NBRC 0622 / NRRL Y-65 / CBS 138) (Yeast) protein is Histone H2B.1 (HTB1).